The sequence spans 598 residues: MPCVQAQYGSSPQGASPASQSYSYHSSGEYSSDFLTPEFVKFSMDLTNTEITATTSLPSFSTFMDNYSTGYDVKPPCLYQMPLSGQQSSIKVEDIQMHNYQQHSHLPPQSEEMMPHSGSVYYKPSSPPTPSTPSFQVQHSPMWDDPGSLHNFHQNYVATTHMIEQRKTPVSRLSLFSFKQSPPGTPVSSCQMRFDGPLHVPMNPEPAGSHHVVDGQTFAVPNPIRKPASMGFPGLQIGHASQLLDTQVPSPPSRGSPSNEGLCAVCGDNAACQHYGVRTCEGCKGFFKRTVQKNAKYVCLANKNCPVDKRRRNRCQYCRFQKCLAVGMVKEVVRTDSLKGRRGRLPSKPKSPQDPSPPSPPVSLISALVRAHVDSNPAMTSLDYSRFQANPDYQMSGDDTQHIQQFYDLLTGSMEIIRGWAEKIPGFADLPKADQDLLFESAFLELFVLRLAYRSNPVEGKLIFCNGVVLHRLQCVRGFGEWIDSIVEFSSNLQNMNIDISAFSCIAALAMVTERHGLKEPKRVEELQNKIVNCLKDHVTFNNGGLNRPNYLSKLLGKLPELRTLCTQGLQRIFYLKLEDLVPPPAIIDKLFLDTLPF.

Residues 1-22 (MPCVQAQYGSSPQGASPASQSY) form a disordered region. Low complexity predominate over residues 8 to 22 (YGSSPQGASPASQSY). The segment at residues 260 to 335 (EGLCAVCGDN…VGMVKEVVRT (76 aa)) is a DNA-binding region (nuclear receptor). 2 NR C4-type zinc fingers span residues 263–283 (CAVC…CEGC) and 299–323 (CLAN…FQKC). The Bipartite nuclear localization signal (NLS1) motif lies at 287-314 (FKRTVQKNAKYVCLANKNCPVDKRRRNR). The tract at residues 337–361 (SLKGRRGRLPSKPKSPQDPSPPSPP) is disordered. The Nuclear localization signal (NLS1) signature appears at 338–350 (LKGRRGRLPSKPK). Residues 352 to 361 (PQDPSPPSPP) show a composition bias toward pro residues. One can recognise an NR LBD domain in the interval 360-595 (PPVSLISALV…AIIDKLFLDT (236 aa)). The nuclear export sequence (NES1) signature appears at 443 to 452 (FLELFVLRLA). The nuclear export sequence (NES2) signature appears at 568–577 (QGLQRIFYLK).

This sequence belongs to the nuclear hormone receptor family. NR4 subfamily. Interacts with SFPQ, NCOR2, SIN3A and HADC1. The interaction with NCOR2 increases in the absence of PITX3. Interacts with PER2. In terms of tissue distribution, brain.

The protein localises to the cytoplasm. It localises to the nucleus. Transcriptional regulator which is important for the differentiation and maintenance of meso-diencephalic dopaminergic (mdDA) neurons during development. It is crucial for expression of a set of genes such as SLC6A3, SLC18A2, TH and DRD2 which are essential for development of mdDA neurons. In Mus musculus (Mouse), this protein is Nuclear receptor subfamily 4 group A member 2 (Nr4a2).